Consider the following 274-residue polypeptide: uncharacterized protein (274 aa).

Residues 1 to 20 show a composition bias toward basic and acidic residues; it reads MSLEKSLDEIINERTNGFDH. Disordered regions lie at residues 1–63, 148–217, and 230–274; these read MSLE…HDLD, NLKG…EDLD, and ASTV…MEAV. A compositionally biased stretch (basic residues) spans 21 to 44; it reads KHSRRRGSQNRISKKSRLTYKFKR. The segment covering 45–63 has biased composition (basic and acidic residues); it reads ASKEHNSSPDDGPWQHDLD. Residues 85–161 enclose the RRM domain; it reads FGVRVENLHY…SEIQISKKSP (77 aa). Polar residues predominate over residues 148–160; that stretch reads NLKGSEIQISKKS. 2 stretches are compositionally biased toward low complexity: residues 181 to 190 and 200 to 211; these read SSRSNRGFNR and RSSSKKSSNNSI. The segment covering 230-245 has biased composition (polar residues); the sequence is ASTVSSHSSQDFTPSI. Acidic residues predominate over residues 263–274; it reads LTEEMDLQMEAV.

This is an uncharacterized protein from Schizosaccharomyces pombe (strain 972 / ATCC 24843) (Fission yeast).